A 207-amino-acid chain; its full sequence is MPQPDFRLIRLLPLAALVLTACSVTTPKGPGKSPDSPQWRQHQQDVRNLNQYQTRGAFAYISDQQKVYARFFWQQTGQDRYRLLLTNPLGSTELELNAQPGNVQLVDNKGQRYTADDAEEMIGKLTGMPIPLNSLRQWILGLPGDATDYKLDDQYRLSEITYSQNGKNWKVVYGGYDTKTQPAMPANMELTDGGQRIKLKMDNWIVK.

An N-terminal signal peptide occupies residues 1–21; sequence MPQPDFRLIRLLPLAALVLTA. Cysteine 22 is lipidated: N-palmitoyl cysteine. Cysteine 22 carries the S-diacylglycerol cysteine lipid modification.

Belongs to the LolB family. In terms of assembly, monomer.

The protein resides in the cell outer membrane. Plays a critical role in the incorporation of lipoproteins in the outer membrane after they are released by the LolA protein. This Shigella sonnei (strain Ss046) protein is Outer-membrane lipoprotein LolB.